The chain runs to 158 residues: Crossover junction endodeoxyribonuclease RuvC (158 aa).

Active-site residues include Asp-7, Glu-67, and Asp-140. Mg(2+)-binding residues include Asp-7, Glu-67, and Asp-140.

This sequence belongs to the RuvC family. As to quaternary structure, homodimer which binds Holliday junction (HJ) DNA. The HJ becomes 2-fold symmetrical on binding to RuvC with unstacked arms; it has a different conformation from HJ DNA in complex with RuvA. In the full resolvosome a probable DNA-RuvA(4)-RuvB(12)-RuvC(2) complex forms which resolves the HJ. Mg(2+) is required as a cofactor.

Its subcellular location is the cytoplasm. The enzyme catalyses Endonucleolytic cleavage at a junction such as a reciprocal single-stranded crossover between two homologous DNA duplexes (Holliday junction).. Its function is as follows. The RuvA-RuvB-RuvC complex processes Holliday junction (HJ) DNA during genetic recombination and DNA repair. Endonuclease that resolves HJ intermediates. Cleaves cruciform DNA by making single-stranded nicks across the HJ at symmetrical positions within the homologous arms, yielding a 5'-phosphate and a 3'-hydroxyl group; requires a central core of homology in the junction. The consensus cleavage sequence is 5'-(A/T)TT(C/G)-3'. Cleavage occurs on the 3'-side of the TT dinucleotide at the point of strand exchange. HJ branch migration catalyzed by RuvA-RuvB allows RuvC to scan DNA until it finds its consensus sequence, where it cleaves and resolves the cruciform DNA. In Dictyoglomus turgidum (strain DSM 6724 / Z-1310), this protein is Crossover junction endodeoxyribonuclease RuvC.